We begin with the raw amino-acid sequence, 140 residues long: Large ribosomal subunit protein uL16 (140 aa).

A compositionally biased stretch (basic residues) spans 1 to 14 (MLSPRRTKFRKQQR). The interval 1–22 (MLSPRRTKFRKQQRGRMEGAAT) is disordered.

Belongs to the universal ribosomal protein uL16 family. As to quaternary structure, part of the 50S ribosomal subunit.

Its function is as follows. Binds 23S rRNA and is also seen to make contacts with the A and possibly P site tRNAs. The chain is Large ribosomal subunit protein uL16 from Cyanothece sp. (strain PCC 7425 / ATCC 29141).